The chain runs to 103 residues: Phosphoribosyl-ATP pyrophosphatase (103 aa).

The protein belongs to the PRA-PH family.

The protein localises to the cytoplasm. The enzyme catalyses 1-(5-phospho-beta-D-ribosyl)-ATP + H2O = 1-(5-phospho-beta-D-ribosyl)-5'-AMP + diphosphate + H(+). The protein operates within amino-acid biosynthesis; L-histidine biosynthesis; L-histidine from 5-phospho-alpha-D-ribose 1-diphosphate: step 2/9. This Cereibacter sphaeroides (strain KD131 / KCTC 12085) (Rhodobacter sphaeroides) protein is Phosphoribosyl-ATP pyrophosphatase.